Consider the following 464-residue polypeptide: Clusterin-like protein 1 (464 aa).

The N-terminal stretch at 1–20 is a signal peptide; the sequence is MQPPLFVISVYLLWLKYCDS. Positions 56–109 form a coiled coil; it reads IKQMKIMMERREEEHAKLMKALKKCKEEKQEAQKLMNEVQERLEEEEKLCQASS. 5 cysteine pairs are disulfide-bonded: cysteine 105–cysteine 331, cysteine 116–cysteine 323, cysteine 119–cysteine 320, cysteine 124–cysteine 313, and cysteine 131–cysteine 303. N-linked (GlcNAc...) asparagine glycosylation is found at asparagine 195, asparagine 255, asparagine 309, asparagine 349, asparagine 398, and asparagine 429.

This sequence belongs to the clusterin family.

It localises to the secreted. The polypeptide is Clusterin-like protein 1 (Rattus norvegicus (Rat)).